The primary structure comprises 211 residues: tRNA (pseudouridine(54)-N(1))-methyltransferase (211 aa).

S-adenosyl-L-methionine contacts are provided by Leu128, Gly150, and Cys183.

It belongs to the methyltransferase superfamily. TrmY family. As to quaternary structure, homodimer.

The protein resides in the cytoplasm. It catalyses the reaction pseudouridine(54) in tRNA + S-adenosyl-L-methionine = N(1)-methylpseudouridine(54) in tRNA + S-adenosyl-L-homocysteine + H(+). In terms of biological role, specifically catalyzes the N1-methylation of pseudouridine at position 54 (Psi54) in tRNAs. The polypeptide is tRNA (pseudouridine(54)-N(1))-methyltransferase (Methanosarcina mazei (strain ATCC BAA-159 / DSM 3647 / Goe1 / Go1 / JCM 11833 / OCM 88) (Methanosarcina frisia)).